Here is a 346-residue protein sequence, read N- to C-terminus: Protein U59 (346 aa).

Belongs to the herpesviridae U59/UL88 family.

The protein is Protein U59 of Elephantid herpesvirus 1 (isolate Asian elephant/Berlin/Kiba/1998) (EIHV-1).